We begin with the raw amino-acid sequence, 365 residues long: Fructose-1,6-bisphosphate aldolase/phosphatase (365 aa).

Asp11 serves as the catalytic Proton acceptor; for FBP phosphatase activity. Residues Asp11, His18, Asp52, and Asp53 each coordinate Mg(2+). Residue His18 participates in beta-D-fructose 1,6-bisphosphate binding. A dihydroxyacetone phosphate-binding site is contributed by His18. Beta-D-fructose 1,6-bisphosphate is bound at residue Tyr90. Mg(2+) is bound at residue Gln94. Gly103 to Asn104 serves as a coordination point for beta-D-fructose 1,6-bisphosphate. Asp131 is a Mg(2+) binding site. Residue Lys132 participates in beta-D-fructose 1,6-bisphosphate binding. Dihydroxyacetone phosphate is bound at residue Lys132. Tyr228 (proton donor/acceptor; for FBP aldolase activity) is an active-site residue. The Mg(2+) site is built by Lys231, Asp232, and Asp233. The active-site Schiff-base intermediate with DHAP; for FBP aldolase activity is Lys231. Beta-D-fructose 1,6-bisphosphate-binding positions include Gln241 to Ser242, Arg265, Asp286, and Tyr347. Residues Arg265 and Asp286 each contribute to the dihydroxyacetone phosphate site.

It belongs to the FBP aldolase/phosphatase family. In terms of assembly, homooctamer; dimer of tetramers. Requires Mg(2+) as cofactor.

It catalyses the reaction beta-D-fructose 1,6-bisphosphate + H2O = beta-D-fructose 6-phosphate + phosphate. The catalysed reaction is beta-D-fructose 1,6-bisphosphate = D-glyceraldehyde 3-phosphate + dihydroxyacetone phosphate. Its pathway is carbohydrate biosynthesis; gluconeogenesis. In terms of biological role, catalyzes two subsequent steps in gluconeogenesis: the aldol condensation of dihydroxyacetone phosphate (DHAP) and glyceraldehyde-3-phosphate (GA3P) to fructose-1,6-bisphosphate (FBP), and the dephosphorylation of FBP to fructose-6-phosphate (F6P). This Methanothermobacter marburgensis (strain ATCC BAA-927 / DSM 2133 / JCM 14651 / NBRC 100331 / OCM 82 / Marburg) (Methanobacterium thermoautotrophicum) protein is Fructose-1,6-bisphosphate aldolase/phosphatase.